Reading from the N-terminus, the 256-residue chain is Protein FixA (256 aa).

It belongs to the ETF beta-subunit/FixA family. As to quaternary structure, heterodimer of FixA and FixB.

The protein operates within amine and polyamine metabolism; carnitine metabolism. Its function is as follows. Required for anaerobic carnitine reduction. May bring reductant to CaiA. The chain is Protein FixA from Salmonella paratyphi A (strain ATCC 9150 / SARB42).